Reading from the N-terminus, the 251-residue chain is Ditrans,polycis-undecaprenyl-diphosphate synthase ((2E,6E)-farnesyl-diphosphate specific) (251 aa).

Asp26 is an active-site residue. Asp26 provides a ligand contact to Mg(2+). Substrate contacts are provided by residues 27-30 (GNGR), Trp31, Arg39, His43, and 71-73 (SSE). Asn74 functions as the Proton acceptor in the catalytic mechanism. Substrate is bound by residues Trp75, Arg77, Arg194, and 200-202 (RIS). Residue Glu213 coordinates Mg(2+).

It belongs to the UPP synthase family. In terms of assembly, homodimer. It depends on Mg(2+) as a cofactor.

The enzyme catalyses 8 isopentenyl diphosphate + (2E,6E)-farnesyl diphosphate = di-trans,octa-cis-undecaprenyl diphosphate + 8 diphosphate. In terms of biological role, catalyzes the sequential condensation of isopentenyl diphosphate (IPP) with (2E,6E)-farnesyl diphosphate (E,E-FPP) to yield (2Z,6Z,10Z,14Z,18Z,22Z,26Z,30Z,34E,38E)-undecaprenyl diphosphate (di-trans,octa-cis-UPP). UPP is the precursor of glycosyl carrier lipid in the biosynthesis of bacterial cell wall polysaccharide components such as peptidoglycan and lipopolysaccharide. The polypeptide is Ditrans,polycis-undecaprenyl-diphosphate synthase ((2E,6E)-farnesyl-diphosphate specific) (Buchnera aphidicola subsp. Acyrthosiphon pisum (strain APS) (Acyrthosiphon pisum symbiotic bacterium)).